Reading from the N-terminus, the 518-residue chain is Cytochrome P450 736A117 (518 aa).

N12 carries an N-linked (GlcNAc...) asparagine glycan. Residues F17–Y37 form a helical membrane-spanning segment. 3 N-linked (GlcNAc...) asparagine glycosylation sites follow: N185, N275, and N356. C460 lines the heme pocket.

This sequence belongs to the cytochrome P450 family. Heme serves as cofactor. In terms of tissue distribution, expressed at similar levels in fruit kernel, seedlings, leaves, stems and buds.

It is found in the membrane. The protein is Cytochrome P450 736A117 of Prunus mume (Japanese apricot).